The sequence spans 445 residues: Phosphoglucosamine mutase (445 aa).

S102 (phosphoserine intermediate) is an active-site residue. Mg(2+) contacts are provided by S102, D241, D243, and D245. Phosphoserine is present on S102.

This sequence belongs to the phosphohexose mutase family. Requires Mg(2+) as cofactor. Post-translationally, activated by phosphorylation.

It carries out the reaction alpha-D-glucosamine 1-phosphate = D-glucosamine 6-phosphate. Its function is as follows. Catalyzes the conversion of glucosamine-6-phosphate to glucosamine-1-phosphate. In Escherichia coli O157:H7, this protein is Phosphoglucosamine mutase.